Reading from the N-terminus, the 550-residue chain is Phosphatidylinositol 4-kinase gamma 2 (550 aa).

Ubiquitin-like domains follow at residues 34–111 (SVLV…YDPL) and 112–190 (LVTV…VEDT). The disordered stretch occupies residues 228–247 (VDGLNKGSPPVRSAEGTGGT). One can recognise a PI3K/PI4K catalytic domain in the interval 234 to 532 (GSPPVRSAEG…SVLPASSEAT (299 aa)). Residues 240 to 246 (SAEGTGG) form a G-loop region. ATP contacts are provided by residues 241–247 (AEGTGGT), K263, and 359–362 (QMFM). Residues 392 to 400 (ANADRHAGN) are catalytic loop. The activation loop stretch occupies residues 415 to 441 (PIDHGYCLPENFEDCTFEWLYWPQAKL). D417 is an ATP binding site.

Belongs to the PI3/PI4-kinase family. Type II PI4K subfamily.

It is found in the membrane. It catalyses the reaction a 1,2-diacyl-sn-glycero-3-phospho-(1D-myo-inositol) + ATP = a 1,2-diacyl-sn-glycero-3-phospho-(1D-myo-inositol 4-phosphate) + ADP + H(+). The phosphorylation of phosphatidylinositol (PI) to PI4P is the first committed step in the generation of phosphatidylinositol 4,5-bisphosphate (PIP2), a precursor of the second messenger inositol 1,4,5-trisphosphate (InsP3). The protein is Phosphatidylinositol 4-kinase gamma 2 (PI4KG2) of Arabidopsis thaliana (Mouse-ear cress).